Here is a 341-residue protein sequence, read N- to C-terminus: Phosphoribosylformylglycinamidine cyclo-ligase (341 aa).

This sequence belongs to the AIR synthase family.

Its subcellular location is the cytoplasm. The enzyme catalyses 2-formamido-N(1)-(5-O-phospho-beta-D-ribosyl)acetamidine + ATP = 5-amino-1-(5-phospho-beta-D-ribosyl)imidazole + ADP + phosphate + H(+). It participates in purine metabolism; IMP biosynthesis via de novo pathway; 5-amino-1-(5-phospho-D-ribosyl)imidazole from N(2)-formyl-N(1)-(5-phospho-D-ribosyl)glycinamide: step 2/2. This is Phosphoribosylformylglycinamidine cyclo-ligase from Xanthomonas axonopodis pv. citri (strain 306).